Reading from the N-terminus, the 436-residue chain is DNA-dependent metalloprotease SPRTN (436 aa).

One can recognise a SprT-like domain in the interval 19–186 (IRALFLEFND…RTCGGEFVKI (168 aa)). His85 provides a ligand contact to Zn(2+). Glu86 is a catalytic residue. 2 residues coordinate Zn(2+): His89 and His104. The interval 184 to 219 (VKIKEPENYSQKRKRNNDPTKSELGNSSHVKINKGK) is disordered. Residues 231–239 (FSGTGYKLF) carry the SHP-box motif. The PIP-box signature appears at 271–277 (QTDSTFL). Residues 300–321 (GSPIKLPSSSNNKSHQDSSKQK) are disordered. A UBZ4-type zinc finger spans residues 408-435 (KVCCPVCGTEIFESKINDHLDTCLQNYN). Zn(2+)-binding residues include Cys411, Cys414, His426, and Cys430.

The protein belongs to the Spartan family. In terms of assembly, homodimer. Zn(2+) serves as cofactor. In terms of processing, autocatalytically cleaved in response to double-stranded DNA-binding: autocatalytic cleavage takes place in trans and leads to inactivation.

Its subcellular location is the nucleus. The protein localises to the chromosome. Its activity is regulated as follows. DNA-binding activates the protease activity: single-stranded DNA-binding specifically activates ability to cleave covalent DNA-protein cross-links (DPCs). In contrast, double-stranded DNA-binding specifically activates autocatalytic cleavage, and subsequent inactivation. Functionally, DNA-dependent metalloendopeptidase that mediates the proteolytic cleavage of covalent DNA-protein cross-links (DPCs) during DNA synthesis, thereby playing a key role in maintaining genomic integrity. DPCs are highly toxic DNA lesions that interfere with essential chromatin transactions, such as replication and transcription, and which are induced by reactive agents, such as UV light or formaldehyde. Associates with the DNA replication machinery and specifically removes DPCs during DNA synthesis. Catalyzes proteolytic cleavage of the hmces DNA-protein cross-link following unfolding by the brip1/fancj helicase. Acts as a pleiotropic protease for DNA-binding proteins cross-linked with DNA, such as top1, top2a, histones H3 and H4. Mediates degradation of DPCs that are not ubiquitinated, while it is not able to degrade ubiquitinated DPCs. SPRTN activation requires polymerase collision with DPCs followed by helicase bypass of DPCs. May also act as a 'reader' of ubiquitinated pcna: facilitates chromatin association of rad18 and is required for efficient pcna monoubiquitination, promoting a feed-forward loop to enhance pcna ubiquitination and translesion DNA synthesis. Acts as a regulator of translesion DNA synthesis by recruiting vcp/p97 to sites of DNA damage. In Xenopus tropicalis (Western clawed frog), this protein is DNA-dependent metalloprotease SPRTN.